The primary structure comprises 268 residues: Cyclohexadienyl dehydratase (268 aa).

A signal peptide spans 1-25 (MPKSFRHLVQALACLALLASASLQA).

Belongs to the bacterial solute-binding protein 3 family. In terms of assembly, homodimer.

The protein resides in the periplasm. The catalysed reaction is prephenate + H(+) = 3-phenylpyruvate + CO2 + H2O. The enzyme catalyses L-arogenate + H(+) = L-phenylalanine + CO2 + H2O. The protein operates within amino-acid biosynthesis; L-phenylalanine biosynthesis; L-phenylalanine from L-arogenate: step 1/1. Its pathway is amino-acid biosynthesis; L-phenylalanine biosynthesis; phenylpyruvate from prephenate: step 1/1. In terms of biological role, forms alternative pathway for phenylalanine biosynthesis. Can catalyze two reactions: prephenate dehydratase and arogenate dehydratase. May have a role in chemotaxis or transport. The protein is Cyclohexadienyl dehydratase (pheC) of Pseudomonas aeruginosa (strain ATCC 15692 / DSM 22644 / CIP 104116 / JCM 14847 / LMG 12228 / 1C / PRS 101 / PAO1).